The chain runs to 92 residues: Progonadoliberin-1 (92 aa).

Positions 1–23 (METIPKLMAAVVLLTVCLEGCSS) are cleaved as a signal peptide. Position 24 is a pyrrolidone carboxylic acid (Gln-24). Gly-33 is subject to Glycine amide.

The protein belongs to the GnRH family. The precursor is cleaved by ACE, which removes the Gly-Lys-Arg peptide at the C-terminus, leading to mature hormone. The mature form of Gonadoliberin-1 is also cleaved and degraded by ACE. Central nervous system.

The protein resides in the secreted. Functionally, stimulates the secretion of gonadotropins; it stimulates the secretion of both luteinizing and follicle-stimulating hormones. The sequence is that of Progonadoliberin-1 (Gnrh1) from Rattus norvegicus (Rat).